The chain runs to 241 residues: Probable transcriptional regulatory protein Maqu_2154 (241 aa).

Belongs to the TACO1 family.

Its subcellular location is the cytoplasm. This Marinobacter nauticus (strain ATCC 700491 / DSM 11845 / VT8) (Marinobacter aquaeolei) protein is Probable transcriptional regulatory protein Maqu_2154.